A 707-amino-acid chain; its full sequence is Protein kinase C-like 1B (707 aa).

Residues 1-114 form the C2 domain; it reads MLFTGTVRVR…KIGSANDIWV (114 aa). 2 Phorbol-ester/DAG-type zinc fingers span residues 170 to 220 and 248 to 298; these read GHKF…VWKC and PHRF…ANNC. The disordered stretch occupies residues 323–368; the sequence is SKKKPSIMTDTSTDISGSSNSENSGYLQQISEDDSGTTSSRSASKV. Positions 330–365 are enriched in polar residues; it reads MTDTSTDISGSSNSENSGYLQQISEDDSGTTSSRSA. The Protein kinase domain maps to 378–638; the sequence is FTFMKVLGKG…EDAIRAHPFF (261 aa). ATP-binding positions include 384 to 392 and Lys-407; that span reads LGKGSFGKV. Asp-502 (proton acceptor) is an active-site residue. The AGC-kinase C-terminal domain occupies 639–707; it reads REIDWDALES…FSFINPHFTY (69 aa).

The protein belongs to the protein kinase superfamily. AGC Ser/Thr protein kinase family. PKC subfamily. In terms of tissue distribution, expressed selectively in neurons that receive, transmit and process environmental signals.

The protein localises to the membrane. Its subcellular location is the cytoplasm. It localises to the cytoskeleton. It catalyses the reaction L-seryl-[protein] + ATP = O-phospho-L-seryl-[protein] + ADP + H(+). The enzyme catalyses L-threonyl-[protein] + ATP = O-phospho-L-threonyl-[protein] + ADP + H(+). Functionally, PKC is activated by diacylglycerol which in turn phosphorylates a range of cellular proteins. PKC also serves as the receptor for phorbol esters, a class of tumor promoters. Involved in neuropeptide secretion in motor axons. Likely to act via the extracellular signal-regulated kinase/mitogen-activated protein kinase (ERK/MAPK) pathway in the signaling response to various sensory neurons; temperature, odor, taste, and osmolality. Its role in regulation differs depending on the neuron in which it is acting; thermosensation in AFD neurons, osmolality in ASH neurons, olfactory perception in AWA and AWC neurons. Promotes dauer formation mediated by the insulin/IGF pathway. Required for resistance to antimitotic toxins. This is Protein kinase C-like 1B from Caenorhabditis elegans.